The following is a 146-amino-acid chain: Protein MGF 100-3L (146 aa).

Belongs to the asfivirus MGF 100 family.

In terms of biological role, plays a role in virus cell tropism, and may be required for efficient virus replication in macrophages. The sequence is that of Protein MGF 100-3L from Ornithodoros (relapsing fever ticks).